The following is a 282-amino-acid chain: Dihydroorotate dehydrogenase B (NAD(+)), electron transfer subunit homolog (282 aa).

Residues 2–100 (GGTALNEIVK…VGPLGNPSEI (99 aa)) form the FAD-binding FR-type domain. Residues cysteine 225, cysteine 228, and cysteine 240 each contribute to the [2Fe-2S] cluster site.

It belongs to the PyrK family. [2Fe-2S] cluster serves as cofactor. It depends on FAD as a cofactor.

The protein is Dihydroorotate dehydrogenase B (NAD(+)), electron transfer subunit homolog of Thermotoga maritima (strain ATCC 43589 / DSM 3109 / JCM 10099 / NBRC 100826 / MSB8).